Consider the following 120-residue polypeptide: Prefoldin subunit beta (120 aa).

It belongs to the prefoldin subunit beta family. In terms of assembly, heterohexamer of two alpha and four beta subunits.

The protein localises to the cytoplasm. Functionally, molecular chaperone capable of stabilizing a range of proteins. Seems to fulfill an ATP-independent, HSP70-like function in archaeal de novo protein folding. This Methanothrix thermoacetophila (strain DSM 6194 / JCM 14653 / NBRC 101360 / PT) (Methanosaeta thermophila) protein is Prefoldin subunit beta.